A 509-amino-acid chain; its full sequence is Maturase K (509 aa).

The protein belongs to the intron maturase 2 family. MatK subfamily.

The protein resides in the plastid. The protein localises to the chloroplast. In terms of biological role, usually encoded in the trnK tRNA gene intron. Probably assists in splicing its own and other chloroplast group II introns. This Atropa belladonna (Belladonna) protein is Maturase K.